The sequence spans 236 residues: Ribose-5-phosphate isomerase A (236 aa).

Substrate is bound by residues 32–35 (TGST), 87–90 (DGSD), and 100–103 (KGGG). Residue Glu-109 is the Proton acceptor of the active site. Lys-127 contributes to the substrate binding site.

This sequence belongs to the ribose 5-phosphate isomerase family. Homodimer.

It carries out the reaction aldehydo-D-ribose 5-phosphate = D-ribulose 5-phosphate. Its pathway is carbohydrate degradation; pentose phosphate pathway; D-ribose 5-phosphate from D-ribulose 5-phosphate (non-oxidative stage): step 1/1. Catalyzes the reversible conversion of ribose-5-phosphate to ribulose 5-phosphate. This Haloquadratum walsbyi (strain DSM 16790 / HBSQ001) protein is Ribose-5-phosphate isomerase A.